A 385-amino-acid polypeptide reads, in one-letter code: MIATGALLRVLLLLLAFGHSTYGAECDPPCDPQYGFCEADNVCRCHVGWEGPLCDKCVTAPGCVNGVCKEPWQCICKDGWDGKFCEIDVRACTSTPCANNGTCVDLEKGQYECSCTPGFSGKDCQHKAGPCVINGSPCQHGGACVDDEGQASHASCLCPPGFSGNFCEIVAATNSCTPNPCENDGVCTDIGGDFRCRCPAGFVDKTCSRPVSNCASGPCQNGGTCLQHTQVSFECLCKPPFMGPTCAKKRGASPVQVTHLPSGYGLTYRLTPGVHELPVQQPEQHILKVSMKELNKSTPLLTEGQAICFTILGVLTSLVVLGTVAIVFLNKCETWVSNLRYNHTFRKKKNLLLQYNSGEELAVNIIFPEKIDMTTFNKEAGDEEI.

A signal peptide spans 1–23; it reads MIATGALLRVLLLLLAFGHSTYG. EGF-like domains are found at residues 24-55, 53-86, 88-125, 127-168, 172-208, and 210-247; these read AECDPPCDPQYGFCEADNVCRCHVGWEGPLCD, LCDKCVTAPGCVNGVCKEPWQCICKDGWDGKFCE, DVRACTSTPCANNGTCVDLEKGQYECSCTPGFSGKDCQ, KAGP…NFCE, ATNSCTPNPCENDGVCTDIGGDFRCRCPAGFVDKTCS, and PVSNCASGPCQNGGTCLQHTQVSFECLCKPPFMGPTCA. Residues 24–305 lie on the Extracellular side of the membrane; that stretch reads AECDPPCDPQ…KSTPLLTEGQ (282 aa). Intrachain disulfides connect Cys26/Cys37, Cys30/Cys43, Cys45/Cys54, Cys57/Cys68, Cys63/Cys74, Cys76/Cys85, Cys92/Cys103, Cys97/Cys113, Cys115/Cys124, Cys131/Cys144, Cys138/Cys156, and Cys158/Cys167. Ser94 carries O-linked (GalNAc...) serine glycosylation. Asn100 is a glycosylation site (N-linked (GlcNAc...) asparagine). An N-linked (GlcNAc...) asparagine; atypical; partial glycan is attached at Asn165. N-linked (GlcNAc...) asparagine; atypical glycosylation occurs at Asn174. 6 disulfide bridges follow: Cys176-Cys187, Cys181-Cys196, Cys198-Cys207, Cys214-Cys225, Cys219-Cys235, and Cys237-Cys246. Ser216 carries an O-linked (GalNAc...) serine glycan. An O-linked (GalNAc...) threonine glycan is attached at Thr224. A glycan (O-linked (GalNAc...) threonine) is linked at Thr258. Thr267 carries O-linked (GalNAc...) threonine; partial glycosylation. O-linked (GalNAc...) threonine glycosylation is present at Thr271. Residue Asn295 is glycosylated (N-linked (GlcNAc...) asparagine). Residues 306–329 form a helical membrane-spanning segment; the sequence is AICFTILGVLTSLVVLGTVAIVFL. Topologically, residues 330–385 are cytoplasmic; the sequence is NKCETWVSNLRYNHTFRKKKNLLLQYNSGEELAVNIIFPEKIDMTTFNKEAGDEEI.

As to quaternary structure, monomer. Interacts with SH3RF2. Post-translationally, N- and O-glycosylated. Highly expressed in fetal liver, placenta, adult adrenal gland, brain, testis and ovary and, to a lesser degree, in adult kidney, muscle, thymus and heart.

It is found in the membrane. The protein resides in the cytoplasm. Its function is as follows. May have a role in neuroendocrine differentiation. Inhibits adipocyte differentiation. The protein is Protein delta homolog 1 (Dlk1) of Mus musculus (Mouse).